The following is a 335-amino-acid chain: Leucine-rich repeat-containing protein 39 (335 aa).

A coiled-coil region spans residues 10–47 (AVNAVKEVWEKRIKKLNEDLKREKEFQHKLVRIWEERV). LRR repeat units follow at residues 84 to 105 (QLQEWQLHRTGLLKIPEFIGRF), 107 to 128 (NLIVLDLSRNTISEIPPGIGLL), 130 to 151 (RLQELILSYNKIKTVPKELSNC), 153 to 176 (SLEKLELAVNRDICDLPQELSNLL), 177 to 197 (KLTHLDLSMNDFTTIPLAVLN), 200 to 221 (ALEWLDMGSNKLEQLPDTIERM), 223 to 244 (NLHTLWLQRNEITCLPQTISNM), 246 to 267 (NLGTLVLSNNKLQDIPVCMEEM), and 269 to 290 (NLRFVNFRDNPLKLKVSLPPSE).

Interacts with MYH7 (via C-terminus). In terms of tissue distribution, highly expressed in skeletal muscle and heart. Not detected in other tissues tested.

It localises to the cytoplasm. It is found in the myofibril. The protein resides in the sarcomere. Its subcellular location is the m line. In terms of biological role, component of the sarcomeric M-band which plays a role in myocyte response to biomechanical stress. May regulate expression of other M-band proteins via an SRF-dependent pathway. Important for normal contractile function in heart. This chain is Leucine-rich repeat-containing protein 39 (LRRC39), found in Homo sapiens (Human).